The chain runs to 282 residues: HTH-type transcriptional activator RhaR (282 aa).

Residues 179–277 form the HTH araC/xylS-type domain; the sequence is DKLITALAGS…GMTPVQWRHR (99 aa). 2 consecutive DNA-binding regions (H-T-H motif) follow at residues 196 to 217 and 244 to 267; these read EKFC…RTQT and VSEV…NREV.

Binds DNA as a dimer.

It is found in the cytoplasm. Functionally, activates expression of the rhaSR operon in response to L-rhamnose. The polypeptide is HTH-type transcriptional activator RhaR (Enterobacter sp. (strain 638)).